The following is a 90-amino-acid chain: UPF0298 protein YlbG (90 aa).

Belongs to the UPF0298 family.

The protein resides in the cytoplasm. This is UPF0298 protein YlbG (ylbG) from Bacillus subtilis (strain 168).